A 252-amino-acid chain; its full sequence is Aspartate/glutamate leucyltransferase (252 aa).

Belongs to the R-transferase family. Bpt subfamily.

Its subcellular location is the cytoplasm. It carries out the reaction N-terminal L-glutamyl-[protein] + L-leucyl-tRNA(Leu) = N-terminal L-leucyl-L-glutamyl-[protein] + tRNA(Leu) + H(+). The enzyme catalyses N-terminal L-aspartyl-[protein] + L-leucyl-tRNA(Leu) = N-terminal L-leucyl-L-aspartyl-[protein] + tRNA(Leu) + H(+). Functions in the N-end rule pathway of protein degradation where it conjugates Leu from its aminoacyl-tRNA to the N-termini of proteins containing an N-terminal aspartate or glutamate. This is Aspartate/glutamate leucyltransferase from Xanthomonas campestris pv. campestris (strain B100).